The primary structure comprises 509 residues: Citrate synthase 3, peroxisomal (509 aa).

Active-site residues include His-319, His-358, and Asp-414. The segment at 485–509 (SKESDKLGQVATSNASRRRLAGSSV) is disordered. Basic residues predominate over residues 500 to 509 (SRRRLAGSSV).

It belongs to the citrate synthase family. As to expression, widely expressed. Expressed throughout the shoot. Expressed in flower, silique, stem, cauline leaf, young leaf, mature leaf and senescent leaf.

It localises to the peroxisome. It carries out the reaction oxaloacetate + acetyl-CoA + H2O = citrate + CoA + H(+). It participates in carbohydrate metabolism; tricarboxylic acid cycle; isocitrate from oxaloacetate: step 1/2. In terms of biological role, peroxisomal citrate synthase required for the fatty acid respiration in seedlings, citrate being exported from peroxisomes into mitochondria during respiration of triacylglycerol (TAG). Indeed, complete respiration requires the transfer of carbon in the form of citrate from the peroxisome to the mitochondria. The sequence is that of Citrate synthase 3, peroxisomal (CSY3) from Arabidopsis thaliana (Mouse-ear cress).